Reading from the N-terminus, the 305-residue chain is MLKQRTIKSIVKTVGIGLHSGRKVELTLRPAAPGTGIVFSRVDLPTPVDIPASAMSIGDTRLASVLQKDGARVSTVEHLMSACAGLGIDNLYVDVTAEEIPIMDGSAASFVFLIQSAGIEEQNAPKRFIKVTKPVEIRDGDKFARLEPYFGFKLKFTIDFRHPAVDKTGQELEVDFANTSYVREIARARTFGFAHEVEMMRELGLARGGSMDNAIVLDEYRILNNDGLRYDDEFVKHKMLDAIGDLYVVGHPLLASYTAYKSGHGLNNALLRELLAHEDAYEIVTFDDPQAAPKGFAFDAQTAFA.

Zn(2+)-binding residues include His-78, His-237, and Asp-241. Catalysis depends on His-264, which acts as the Proton donor.

This sequence belongs to the LpxC family. It depends on Zn(2+) as a cofactor.

The catalysed reaction is a UDP-3-O-[(3R)-3-hydroxyacyl]-N-acetyl-alpha-D-glucosamine + H2O = a UDP-3-O-[(3R)-3-hydroxyacyl]-alpha-D-glucosamine + acetate. It functions in the pathway glycolipid biosynthesis; lipid IV(A) biosynthesis; lipid IV(A) from (3R)-3-hydroxytetradecanoyl-[acyl-carrier-protein] and UDP-N-acetyl-alpha-D-glucosamine: step 2/6. Catalyzes the hydrolysis of UDP-3-O-myristoyl-N-acetylglucosamine to form UDP-3-O-myristoylglucosamine and acetate, the committed step in lipid A biosynthesis. This chain is UDP-3-O-acyl-N-acetylglucosamine deacetylase, found in Burkholderia ambifaria (strain ATCC BAA-244 / DSM 16087 / CCUG 44356 / LMG 19182 / AMMD) (Burkholderia cepacia (strain AMMD)).